A 135-amino-acid chain; its full sequence is Beta/delta-urticatoxin-Ui2a (135 aa).

Positions 1 to 18 (MGAIVLVAIMALVASSSA) are cleaved as a signal peptide. A propeptide spanning residues 19–72 (FSDDEQNMMNAEGEKGIRSYSAADDVSDMIESLFVNSGNRNLVLMMLSGRPQPN) is cleaved from the precursor. 6 disulfide bridges follow: Cys-75/Cys-92, Cys-82/Cys-97, Cys-91/Cys-105, Cys-107/Cys-121, Cys-114/Cys-126, and Cys-120/Cys-134.

The protein belongs to the urticatoxin-2 family. In terms of tissue distribution, expressed in trichomes, that are stiff epidermal hairs located on the surface of petioles and leaves.

The protein resides in the secreted. In terms of biological role, plant defense neurotoxin that causes pain and systemic symptoms in mammals via modulation of voltage-gated sodium channels (Nav). Potent modulator of human Nav1.5/SCN5A (EC(50)=55 nM), Nav1.6/SCN8A (EC(50)=0.86 nM), and Nav1.7/SCN9A (EC(50)=208 nM), where it shifts the activation threshold to more negative potentials and delays fast inactivation. Also shifts the voltage-dependence of steady-state fast inactivation of Nav1.6/SCN8A, but not that of Nav1.5/SCN5A or Nav1.7/SCN9A. On Nav1.7/SCN9A, principally acts by binding to extracellular loops of domain IV (Nav site 3). In vivo, intraplantar injection into mice causes numerous dose-dependent, immediate, and long-lasting spontaneous pain behaviors, while no swelling is observed in the injected paw. At the highest doses tested, systemic symptoms including hypokinesia and hypersalivation are observed. This Urtica incisa (Scrub nettle) protein is Beta/delta-urticatoxin-Ui2a.